The primary structure comprises 174 residues: Extracellular cysteine protease (174 aa).

Catalysis depends on residues Cys24, His120, and Asn141.

This sequence belongs to the peptidase C47 family. Post-translationally, proteolytically cleaved.

It is found in the secreted. Its subcellular location is the cell wall. Inhibited by heavy metal ions such as Zn(2+) or Ni(2+), iodoacetamide, N-ethylmaleimide, leupeptin, SDS and E-64. Also inhibited by chloromethylketones TPCK and TLCK and by human plasma inhibitor alpha-2-macroglobulin. Stimulated by L-cysteine. Functionally, cysteine protease able to cleave elastin, insulin, myoglobin, fibronectin, fibrinogen, HMW-kininogen, alpha-1-protease inhibitor and alpha-1-antitrypsin. Along with other extracellular proteases may contribute to the colonization and infection of human tissues. The chain is Extracellular cysteine protease (ecpA) from Staphylococcus epidermidis.